A 288-amino-acid polypeptide reads, in one-letter code: NAD kinase (288 aa).

Asp70 functions as the Proton acceptor in the catalytic mechanism. NAD(+)-binding positions include 70–71 (DG), 144–145 (ND), Arg155, Lys172, Asp174, 185–190 (TGYSLS), and Gln245.

Belongs to the NAD kinase family. A divalent metal cation serves as cofactor.

It is found in the cytoplasm. The enzyme catalyses NAD(+) + ATP = ADP + NADP(+) + H(+). Functionally, involved in the regulation of the intracellular balance of NAD and NADP, and is a key enzyme in the biosynthesis of NADP. Catalyzes specifically the phosphorylation on 2'-hydroxyl of the adenosine moiety of NAD to yield NADP. The chain is NAD kinase from Citrifermentans bemidjiense (strain ATCC BAA-1014 / DSM 16622 / JCM 12645 / Bem) (Geobacter bemidjiensis).